The chain runs to 213 residues: Guanylate kinase (213 aa).

In terms of domain architecture, Guanylate kinase-like spans 6 to 186 (GLLIILSSPS…TEERLKTIVS (181 aa)). Residue 13–20 (SPSGAGKS) coordinates ATP.

The protein belongs to the guanylate kinase family.

Its subcellular location is the cytoplasm. It carries out the reaction GMP + ATP = GDP + ADP. In terms of biological role, essential for recycling GMP and indirectly, cGMP. The sequence is that of Guanylate kinase from Ruegeria pomeroyi (strain ATCC 700808 / DSM 15171 / DSS-3) (Silicibacter pomeroyi).